The chain runs to 1205 residues: PAN2-PAN3 deadenylation complex catalytic subunit Pan2 (1205 aa).

WD repeat units follow at residues 153–193 (DESE…QKYA), 195–231 (ETPGVTIMRQTNRFFFCGHTSGKVSLRDLRSFKVEHE), 244–280 (VHGNLLAACGFSSRLTGLACDRFLKVYDLRMMRAITP), and 328–367 (PVGPLLMTFDVSASKQALAFGDSEGCVHLWTDSPEPSFNP). Residues 368–484 (YSRETEFALP…PTGREEEPLH (117 aa)) form a linker region. The 440-residue stretch at 485–924 (TVSKKYRKVT…VPAILYYVKR (440 aa)) folds into the USP domain. The residue at position 784 (S784) is a Phosphoserine. Positions 975–1147 (VGLDAEFVTL…EDARTALQLY (173 aa)) constitute an Exonuclease domain. A divalent metal cation is bound by residues D978, E980, D1087, and D1139. Residues 1179-1205 (WKVPEPESQSSPKSKAGLRPGALGWVG) are disordered. Residues 1184–1193 (PESQSSPKSK) show a composition bias toward low complexity. The residue at position 1189 (S1189) is a Phosphoserine.

The protein belongs to the peptidase C19 family. PAN2 subfamily. As to quaternary structure, forms a heterotrimer with an asymmetric homodimer of the regulatory subunit PAN3 to form the poly(A)-nuclease (PAN) deadenylation complex. Interacts with PAN3 isoform 1/Pan3L and isoform 3/Pan3S. Interacts with ZFP36. A divalent metal cation serves as cofactor.

Its subcellular location is the cytoplasm. The protein resides in the P-body. The protein localises to the nucleus. The catalysed reaction is Exonucleolytic cleavage of poly(A) to 5'-AMP.. Positively regulated by the regulatory subunit PAN3. In terms of biological role, catalytic subunit of the poly(A)-nuclease (PAN) deadenylation complex, one of two cytoplasmic mRNA deadenylases involved in general and miRNA-mediated mRNA turnover. PAN specifically shortens poly(A) tails of RNA and the activity is stimulated by poly(A)-binding protein (PABP). PAN deadenylation is followed by rapid degradation of the shortened mRNA tails by the CCR4-NOT complex. Deadenylated mRNAs are then degraded by two alternative mechanisms, namely exosome-mediated 3'-5' exonucleolytic degradation, or deadenylation-dependent mRNA decaping and subsequent 5'-3' exonucleolytic degradation by XRN1. Also acts as an important regulator of the HIF1A-mediated hypoxic response. Required for HIF1A mRNA stability independent of poly(A) tail length regulation. The sequence is that of PAN2-PAN3 deadenylation complex catalytic subunit Pan2 from Rattus norvegicus (Rat).